The primary structure comprises 159 residues: ATP synthase subunit b (159 aa).

Residues 4–24 traverse the membrane as a helical segment; it reads VGINGTLIVQLVTFVILVALL.

This sequence belongs to the ATPase B chain family. In terms of assembly, F-type ATPases have 2 components, F(1) - the catalytic core - and F(0) - the membrane proton channel. F(1) has five subunits: alpha(3), beta(3), gamma(1), delta(1), epsilon(1). F(0) has three main subunits: a(1), b(2) and c(10-14). The alpha and beta chains form an alternating ring which encloses part of the gamma chain. F(1) is attached to F(0) by a central stalk formed by the gamma and epsilon chains, while a peripheral stalk is formed by the delta and b chains.

Its subcellular location is the cell inner membrane. In terms of biological role, f(1)F(0) ATP synthase produces ATP from ADP in the presence of a proton or sodium gradient. F-type ATPases consist of two structural domains, F(1) containing the extramembraneous catalytic core and F(0) containing the membrane proton channel, linked together by a central stalk and a peripheral stalk. During catalysis, ATP synthesis in the catalytic domain of F(1) is coupled via a rotary mechanism of the central stalk subunits to proton translocation. Its function is as follows. Component of the F(0) channel, it forms part of the peripheral stalk, linking F(1) to F(0). The sequence is that of ATP synthase subunit b from Acidithiobacillus ferrooxidans (strain ATCC 23270 / DSM 14882 / CIP 104768 / NCIMB 8455) (Ferrobacillus ferrooxidans (strain ATCC 23270)).